The sequence spans 62 residues: DNA-binding protein 7 (62 aa).

The protein belongs to the 7 kDa DNA-binding/endoribonuclease P2 family. In terms of assembly, monomer.

It is found in the cytoplasm. Functionally, can constrain negative DNA supercoils. May be involved in maintaining the integrity of the genome at high temperature. This chain is DNA-binding protein 7, found in Metallosphaera sedula (strain ATCC 51363 / DSM 5348 / JCM 9185 / NBRC 15509 / TH2).